Consider the following 450-residue polypeptide: Phosphoglucosamine mutase (450 aa).

Ser-102 functions as the Phosphoserine intermediate in the catalytic mechanism. Mg(2+) is bound by residues Ser-102, Asp-243, Asp-245, and Asp-247. Ser-102 carries the post-translational modification Phosphoserine.

Belongs to the phosphohexose mutase family. It depends on Mg(2+) as a cofactor. Post-translationally, activated by phosphorylation.

The catalysed reaction is alpha-D-glucosamine 1-phosphate = D-glucosamine 6-phosphate. In terms of biological role, catalyzes the conversion of glucosamine-6-phosphate to glucosamine-1-phosphate. This is Phosphoglucosamine mutase from Rhizobium rhizogenes (strain K84 / ATCC BAA-868) (Agrobacterium radiobacter).